A 1162-amino-acid polypeptide reads, in one-letter code: PAN2-PAN3 deadenylation complex catalytic subunit PAN2 (1162 aa).

WD repeat units lie at residues 27–66, 153–193, 196–233, and 300–339; these read AKEK…YTRH, NTVQ…VVKT, GHSC…NVYD, and HPCQ…TGFT. Residues 341 to 491 form a linker region; sequence TATTILEYPD…LMNYKPSNDR (151 aa). Residues 401–443 are disordered; that stretch reads VPLPPKSSAASSSHTALSTSSDSRPNTARSGNPSSGGQKYRLL. Residues 407–423 show a composition bias toward low complexity; the sequence is SSAASSSHTALSTSSDS. Residues 424–437 are compositionally biased toward polar residues; sequence RPNTARSGNPSSGG. In terms of domain architecture, USP spans 492-904; that stretch reads EVPPAFTKLQ…TPEIAIYSDA (413 aa). The region spanning 956–1126 is the Exonuclease domain; the sequence is VALDAEFVAL…IEDAYTALVL (171 aa). A divalent metal cation contacts are provided by Asp959, Glu961, Asp1068, and Asp1119.

The protein belongs to the peptidase C19 family. PAN2 subfamily. Forms a heterotrimer with an asymmetric homodimer of the regulatory subunit PAN3 to form the poly(A)-nuclease (PAN) deadenylation complex. Requires a divalent metal cation as cofactor.

The protein localises to the cytoplasm. It carries out the reaction Exonucleolytic cleavage of poly(A) to 5'-AMP.. With respect to regulation, positively regulated by the regulatory subunit PAN3. Functionally, catalytic subunit of the poly(A)-nuclease (PAN) deadenylation complex, one of two cytoplasmic mRNA deadenylases involved in mRNA turnover. PAN specifically shortens poly(A) tails of RNA and the activity is stimulated by poly(A)-binding protein PAB1. PAN deadenylation is followed by rapid degradation of the shortened mRNA tails by the CCR4-NOT complex. Deadenylated mRNAs are then degraded by two alternative mechanisms, namely exosome-mediated 3'-5' exonucleolytic degradation, or deadenylation-dependent mRNA decaping and subsequent 5'-3' exonucleolytic degradation by XRN1. May also be involved in post-transcriptional maturation of mRNA poly(A) tails. The polypeptide is PAN2-PAN3 deadenylation complex catalytic subunit PAN2 (Eremothecium gossypii (strain ATCC 10895 / CBS 109.51 / FGSC 9923 / NRRL Y-1056) (Yeast)).